The chain runs to 536 residues: Octopamine receptor beta-2R (536 aa).

The disordered stretch occupies residues 1-26; sequence MLLCDGLGPEPPRQRHRNRTSAARIR. At 1–157 the chain is on the extracellular side; sequence MLLCDGLGPE…LDNIVWVFKA (157 aa). A compositionally biased stretch (basic residues) spans 14–26; that stretch reads QRHRNRTSAARIR. Residues asparagine 18, asparagine 92, asparagine 113, and asparagine 126 are each glycosylated (N-linked (GlcNAc...) asparagine). The helical transmembrane segment at 158-178 threads the bilayer; the sequence is FVMLLIIIAAICGNLLVIISV. Residues 179-190 are Cytoplasmic-facing; it reads MRVRKLRVITNY. A helical membrane pass occupies residues 191 to 211; the sequence is FVVSLAMADIMVAIMAMTFNF. At 212-233 the chain is on the extracellular side; the sequence is SVQVTGRWNFSPFLCDLWNSLD. The chain crosses the membrane as a helical span at residues 234–256; that stretch reads VYFSTASILHLCCISVDRYYAIV. The Cytoplasmic portion of the chain corresponds to 257-270; the sequence is KPLKYPISMTKRVV. The helical transmembrane segment at 271–291 threads the bilayer; it reads GIMLLNTWISPALLSFLPIFI. The Extracellular segment spans residues 292–320; that stretch reads GWYTTPQHQQFVIQNPTQCSFVVNKYYAV. Residues 321–341 traverse the membrane as a helical segment; sequence ISSSISFWIPCTIMIFTYLAI. The Cytoplasmic portion of the chain corresponds to 342–412; that stretch reads FREANRQEKQ…MKREHKAART (71 aa). The helical transmembrane segment at 413–433 threads the bilayer; sequence LGIIMGTFILCWLPFFLWYTL. The Extracellular portion of the chain corresponds to 434–444; that stretch reads SMTCEECQVPD. A helical transmembrane segment spans residues 445-465; sequence IVVSILFWIGYFNSTLNPLIY. Topologically, residues 466-536 are cytoplasmic; the sequence is AYFNRDFREA…RRQSQMVDNL (71 aa).

It belongs to the G-protein coupled receptor 1 family. In the adult, expressed in the superior protocerebrum and the optic lobe medulla of the central nervous system, nurse cells of egg chambers in the ovary at oogenic stages 1-10, and spermatogonia and spermatocytes in the testis. Expressed in the oviduct epithelium. Also expressed in the spermatheca. Expressed in embryonic and larval ventral nerve cord and brain lobe, embryonic and larval salivary glands and larval imaginal disk and midgut. Also expressed in larval synaptic boutons.

The protein localises to the cell membrane. In terms of biological role, autoreceptor for octopamine (OA), which is a neurotransmitter, neurohormone, and neuromodulator in invertebrates. Essential for ovulation and fertilization. During ovulation it mediates the OA-induced relaxation of the oviduct visceral muscles, by increasing cAMP levels and activating effectors such as calmodulin-dependent kinase II (CaMKII) and cAMP-dependent protein kinase A (PKA) pathways. Positively regulates synaptic growth; an action that is antagonized by Octbeta1R. The polypeptide is Octopamine receptor beta-2R (Drosophila melanogaster (Fruit fly)).